The sequence spans 982 residues: Chromosome partition protein Smc (982 aa).

Residue 33-40 participates in ATP binding; it reads PNGSGKSN. Coiled-coil stretches lie at residues 171-231, 280-310, and 337-377; these read RYTK…ELAV, SADM…VIID, and QTQL…QIEK. One can recognise an SMC hinge domain in the interval 416-535; it reads TGILNTLGTF…AKDLNSAINL (120 aa). Coiled-coil stretches lie at residues 575-718 and 753-822; these read SASL…SARE and VKLS…IASN.

This sequence belongs to the SMC family. As to quaternary structure, homodimer.

The protein localises to the cytoplasm. Its function is as follows. Required for chromosome condensation and partitioning. The polypeptide is Chromosome partition protein Smc (Mycoplasma genitalium (strain ATCC 33530 / DSM 19775 / NCTC 10195 / G37) (Mycoplasmoides genitalium)).